Reading from the N-terminus, the 386-residue chain is Formate-dependent phosphoribosylglycinamide formyltransferase (386 aa).

N(1)-(5-phospho-beta-D-ribosyl)glycinamide is bound by residues 15–16 and Glu75; that span reads EL. Residues Arg107, Lys148, 153-158, 188-191, and Glu196 contribute to the ATP site; these read SSGKGQ and EQFI. The region spanning 112–301 is the ATP-grasp domain; that stretch reads ALAAQQLNLQ…EFELHLRAIV (190 aa). Residues Glu260 and Glu272 each coordinate Mg(2+). N(1)-(5-phospho-beta-D-ribosyl)glycinamide-binding positions include Asp279, Lys349, and 356–357; that span reads RR.

It belongs to the PurK/PurT family. In terms of assembly, homodimer.

It catalyses the reaction N(1)-(5-phospho-beta-D-ribosyl)glycinamide + formate + ATP = N(2)-formyl-N(1)-(5-phospho-beta-D-ribosyl)glycinamide + ADP + phosphate + H(+). It functions in the pathway purine metabolism; IMP biosynthesis via de novo pathway; N(2)-formyl-N(1)-(5-phospho-D-ribosyl)glycinamide from N(1)-(5-phospho-D-ribosyl)glycinamide (formate route): step 1/1. Involved in the de novo purine biosynthesis. Catalyzes the transfer of formate to 5-phospho-ribosyl-glycinamide (GAR), producing 5-phospho-ribosyl-N-formylglycinamide (FGAR). Formate is provided by PurU via hydrolysis of 10-formyl-tetrahydrofolate. This Francisella tularensis subsp. tularensis (strain WY96-3418) protein is Formate-dependent phosphoribosylglycinamide formyltransferase.